Here is a 46-residue protein sequence, read N- to C-terminus: Lariatin (46 aa).

Residues 1-26 constitute a propeptide that is removed on maturation; sequence MTSQPSKKTYNAPSLVQRGKFARTTA. Positions 27 to 34 form a cross-link, isoglutamyl glycine isopeptide (Gly-Glu); sequence GSQLVYRE.

In terms of processing, the linear precursor LarA is probably cleaved by the putative peptidase LarD, generating linear 18-residue Lariatin-A or 20-residue Lariatin-B. These linear peptides are probably cross-linked by LarB. Finally, lariatins A and B may be exported by ABC transporter LarE.

In terms of biological role, peptide antibiotic with selective activity against Mycobacterium species (M.smegmatis, MIC=3.13 ug/ml and M.tuberculosis, MIC=0.39 ug/ml). it is plausible that the target of lariatins lies within the cell wall in mycobacteria. Peptide antibiotic with selective activity against Mycobacterium species (M.smegmatis, MIC=6.25 ug/ml). This is Lariatin from Rhodococcus jostii.